Reading from the N-terminus, the 121-residue chain is MTRIKRGYIARKRRTKIRLFTSSFRGAHSRLTRTISQQKIKALVSAHRDRNRKKREFRGLWISRINAGIGDNDKKKNIYYSYSNFMYNLYKKQLLLNRKIVAQIAIFKGNCLFMIANEIIT.

This sequence belongs to the bacterial ribosomal protein bL20 family.

The protein resides in the plastid. The protein localises to the chloroplast. In terms of biological role, binds directly to 23S ribosomal RNA and is necessary for the in vitro assembly process of the 50S ribosomal subunit. It is not involved in the protein synthesizing functions of that subunit. The protein is Large ribosomal subunit protein bL20c of Lotus japonicus (Lotus corniculatus var. japonicus).